A 490-amino-acid chain; its full sequence is ATP synthase subunit beta (490 aa).

173 to 180 (GGAGVGKT) lines the ATP pocket.

The protein belongs to the ATPase alpha/beta chains family. F-type ATPases have 2 components, CF(1) - the catalytic core - and CF(0) - the membrane proton channel. CF(1) has five subunits: alpha(3), beta(3), gamma(1), delta(1), epsilon(1). CF(0) has three main subunits: a(1), b(2) and c(9-12). The alpha and beta chains form an alternating ring which encloses part of the gamma chain. CF(1) is attached to CF(0) by a central stalk formed by the gamma and epsilon chains, while a peripheral stalk is formed by the delta and b chains.

The protein localises to the cell membrane. The enzyme catalyses ATP + H2O + 4 H(+)(in) = ADP + phosphate + 5 H(+)(out). Its function is as follows. Produces ATP from ADP in the presence of a proton gradient across the membrane. The catalytic sites are hosted primarily by the beta subunits. This Bifidobacterium longum (strain DJO10A) protein is ATP synthase subunit beta.